A 158-amino-acid polypeptide reads, in one-letter code: Cysteine-rich venom protein VAR7 (158 aa).

The N-terminal stretch at 1-22 (MILLKLYLTLAAILCQSRGTTS) is a signal peptide. The SCP domain maps to 41–158 (NKHNDLRRTV…MGCAINLCPN (118 aa)). Residues cysteine 77 and cysteine 156 are joined by a disulfide bond.

The protein belongs to the CRISP family. Post-translationally, contains 8 disulfide bonds. As to expression, expressed by the venom gland.

It is found in the secreted. Its function is as follows. Blocks ryanodine receptors, and potassium channels. The protein is Cysteine-rich venom protein VAR7 of Varanus acanthurus (Ridge-tailed monitor).